The chain runs to 322 residues: 4-diphosphocytidyl-2-C-methyl-D-erythritol kinase (322 aa).

Lys-25 is an active-site residue. ATP is bound at residue 110–120 (PVAGGMAGGSA). The active site involves Asp-152.

The protein belongs to the GHMP kinase family. IspE subfamily.

The enzyme catalyses 4-CDP-2-C-methyl-D-erythritol + ATP = 4-CDP-2-C-methyl-D-erythritol 2-phosphate + ADP + H(+). The protein operates within isoprenoid biosynthesis; isopentenyl diphosphate biosynthesis via DXP pathway; isopentenyl diphosphate from 1-deoxy-D-xylulose 5-phosphate: step 3/6. In terms of biological role, catalyzes the phosphorylation of the position 2 hydroxy group of 4-diphosphocytidyl-2C-methyl-D-erythritol. This Mycolicibacterium gilvum (strain PYR-GCK) (Mycobacterium gilvum (strain PYR-GCK)) protein is 4-diphosphocytidyl-2-C-methyl-D-erythritol kinase.